A 552-amino-acid polypeptide reads, in one-letter code: Chaperonin GroEL (552 aa).

ATP is bound by residues 29–32 (TAGP), K50, 86–90 (DGTTT), G417, and D499.

The protein belongs to the chaperonin (HSP60) family. As to quaternary structure, forms a cylinder of 14 subunits composed of two heptameric rings stacked back-to-back. Interacts with the co-chaperonin GroES.

Its subcellular location is the cytoplasm. It carries out the reaction ATP + H2O + a folded polypeptide = ADP + phosphate + an unfolded polypeptide.. Together with its co-chaperonin GroES, plays an essential role in assisting protein folding. The GroEL-GroES system forms a nano-cage that allows encapsulation of the non-native substrate proteins and provides a physical environment optimized to promote and accelerate protein folding. The polypeptide is Chaperonin GroEL (Ehrlichia canis (strain Jake)).